Reading from the N-terminus, the 61-residue chain is MDPNCSCVAGESCTCAGSCKCKQCRCASCKKSCCSCCPVGCAKCAQGCVCKGASDKCSCCA.

The segment at 1–29 (MDPNCSCVAGESCTCAGSCKCKQCRCASC) is beta. A divalent metal cation is bound by residues cysteine 5, cysteine 7, cysteine 13, cysteine 15, cysteine 19, cysteine 21, cysteine 24, cysteine 26, cysteine 29, cysteine 33, cysteine 34, cysteine 36, cysteine 37, cysteine 41, cysteine 44, cysteine 48, cysteine 50, cysteine 57, cysteine 59, and cysteine 60. Residues 30–61 (KKSCCSCCPVGCAKCAQGCVCKGASDKCSCCA) are alpha.

Belongs to the metallothionein superfamily. Type 1 family.

Metallothioneins have a high content of cysteine residues that bind various heavy metals; these proteins are transcriptionally regulated by both heavy metals and glucocorticoids. In Equus caballus (Horse), this protein is Metallothionein-1B.